Consider the following 124-residue polypeptide: Small ribosomal subunit protein uS12 (124 aa).

Asp-89 is modified (3-methylthioaspartic acid).

Belongs to the universal ribosomal protein uS12 family. Part of the 30S ribosomal subunit. Contacts proteins S8 and S17. May interact with IF1 in the 30S initiation complex.

In terms of biological role, with S4 and S5 plays an important role in translational accuracy. Functionally, interacts with and stabilizes bases of the 16S rRNA that are involved in tRNA selection in the A site and with the mRNA backbone. Located at the interface of the 30S and 50S subunits, it traverses the body of the 30S subunit contacting proteins on the other side and probably holding the rRNA structure together. The combined cluster of proteins S8, S12 and S17 appears to hold together the shoulder and platform of the 30S subunit. The chain is Small ribosomal subunit protein uS12 from Koribacter versatilis (strain Ellin345).